The primary structure comprises 179 residues: Translation initiation factor IF-3 (179 aa).

It belongs to the IF-3 family. Monomer.

It localises to the cytoplasm. Its function is as follows. IF-3 binds to the 30S ribosomal subunit and shifts the equilibrium between 70S ribosomes and their 50S and 30S subunits in favor of the free subunits, thus enhancing the availability of 30S subunits on which protein synthesis initiation begins. The chain is Translation initiation factor IF-3 from Treponema pallidum (strain Nichols).